Here is a 410-residue protein sequence, read N- to C-terminus: Serine hydroxymethyltransferase (410 aa).

Residues Leu116 and 120 to 122 each bind (6S)-5,6,7,8-tetrahydrofolate; that span reads GHL. Position 225 is an N6-(pyridoxal phosphate)lysine (Lys225). Residue 349 to 351 participates in (6S)-5,6,7,8-tetrahydrofolate binding; the sequence is SPF.

The protein belongs to the SHMT family. In terms of assembly, homodimer. Pyridoxal 5'-phosphate is required as a cofactor.

The protein resides in the cytoplasm. The catalysed reaction is (6R)-5,10-methylene-5,6,7,8-tetrahydrofolate + glycine + H2O = (6S)-5,6,7,8-tetrahydrofolate + L-serine. It participates in one-carbon metabolism; tetrahydrofolate interconversion. Its pathway is amino-acid biosynthesis; glycine biosynthesis; glycine from L-serine: step 1/1. Functionally, catalyzes the reversible interconversion of serine and glycine with tetrahydrofolate (THF) serving as the one-carbon carrier. This reaction serves as the major source of one-carbon groups required for the biosynthesis of purines, thymidylate, methionine, and other important biomolecules. Also exhibits THF-independent aldolase activity toward beta-hydroxyamino acids, producing glycine and aldehydes, via a retro-aldol mechanism. The sequence is that of Serine hydroxymethyltransferase from Leuconostoc mesenteroides subsp. mesenteroides (strain ATCC 8293 / DSM 20343 / BCRC 11652 / CCM 1803 / JCM 6124 / NCDO 523 / NBRC 100496 / NCIMB 8023 / NCTC 12954 / NRRL B-1118 / 37Y).